The chain runs to 175 residues: Endoribonuclease YbeY (175 aa).

The Zn(2+) site is built by histidine 129, histidine 133, and histidine 139.

The protein belongs to the endoribonuclease YbeY family. Requires Zn(2+) as cofactor.

Its subcellular location is the cytoplasm. Its function is as follows. Single strand-specific metallo-endoribonuclease involved in late-stage 70S ribosome quality control and in maturation of the 3' terminus of the 16S rRNA. The sequence is that of Endoribonuclease YbeY from Lactobacillus johnsonii (strain CNCM I-12250 / La1 / NCC 533).